The primary structure comprises 361 residues: DNA replication and repair protein RecF (361 aa).

Position 30-37 (30-37) interacts with ATP; sequence GANGSGKT.

The protein belongs to the RecF family.

It localises to the cytoplasm. Functionally, the RecF protein is involved in DNA metabolism; it is required for DNA replication and normal SOS inducibility. RecF binds preferentially to single-stranded, linear DNA. It also seems to bind ATP. The chain is DNA replication and repair protein RecF from Pectobacterium atrosepticum (strain SCRI 1043 / ATCC BAA-672) (Erwinia carotovora subsp. atroseptica).